The primary structure comprises 445 residues: 3-phosphoshikimate 1-carboxyvinyltransferase (445 aa).

Residues Lys-25, Ser-26, and Arg-30 each coordinate 3-phosphoshikimate. Lys-25 is a phosphoenolpyruvate binding site. Residues Gly-98 and Arg-126 each coordinate phosphoenolpyruvate. 3-phosphoshikimate contacts are provided by Ser-171, Gln-173, Asp-324, and Lys-351. Gln-173 is a phosphoenolpyruvate binding site. Asp-324 serves as the catalytic Proton acceptor. Residues Arg-355 and Arg-398 each coordinate phosphoenolpyruvate.

This sequence belongs to the EPSP synthase family. Monomer.

The protein localises to the cytoplasm. It catalyses the reaction 3-phosphoshikimate + phosphoenolpyruvate = 5-O-(1-carboxyvinyl)-3-phosphoshikimate + phosphate. Its pathway is metabolic intermediate biosynthesis; chorismate biosynthesis; chorismate from D-erythrose 4-phosphate and phosphoenolpyruvate: step 6/7. Its function is as follows. Catalyzes the transfer of the enolpyruvyl moiety of phosphoenolpyruvate (PEP) to the 5-hydroxyl of shikimate-3-phosphate (S3P) to produce enolpyruvyl shikimate-3-phosphate and inorganic phosphate. In Hydrogenovibrio crunogenus (strain DSM 25203 / XCL-2) (Thiomicrospira crunogena), this protein is 3-phosphoshikimate 1-carboxyvinyltransferase.